A 471-amino-acid chain; its full sequence is Cysteine--tRNA ligase (471 aa).

A Zn(2+)-binding site is contributed by C30. The 'HIGH' region signature appears at 32–42; sequence PTVYNFAHIGN. Zn(2+) contacts are provided by C212, H237, and E241. Positions 270 to 274 match the 'KMSKS' region motif; that stretch reads KMSKS. An ATP-binding site is contributed by K273.

It belongs to the class-I aminoacyl-tRNA synthetase family. Monomer. Zn(2+) serves as cofactor.

The protein resides in the cytoplasm. It carries out the reaction tRNA(Cys) + L-cysteine + ATP = L-cysteinyl-tRNA(Cys) + AMP + diphosphate. In Leptospira interrogans serogroup Icterohaemorrhagiae serovar Lai (strain 56601), this protein is Cysteine--tRNA ligase.